A 417-amino-acid chain; its full sequence is MAEIKNYTLNFGPQHPAAHGVLRLVLELDGEVIQRADPHIGLLHRATEKLAETKTFIQSVPYMDRLDYVSMMVNEHGYVMAIEKLLGIEVPVRAQYIRVMFDEVTRVLNHLMWIGAHALDVGAMAVFLYAFREREDLMDVYEAVSGARMHAAYYRPGGVYRDLPDAMPQYKASKIRNAKALSKMNENRQGSLLDFIDDFFTRFPKCVDEYETLLTDNRIWKQRLVGIGVVSPERALNLGMTGAMLRGSGIEWDLRKKQPYEVYDKLDFDIPVGVNGDCYDRYLVRVEEMRQSTRIVKQCIEWLRKNPGPVMIDNHKVAPPSRVGMKSNMEELIHHFKLFTEGFHVPEGEAYAAVEHPKGEFGIYLISDGANKPYRLKIRAPGYAHLSTLDEMARGHMIADAVTIIGTQDIVFGEVDR.

The protein belongs to the complex I 49 kDa subunit family. As to quaternary structure, NDH-1 is composed of 14 different subunits. Subunits NuoB, C, D, E, F, and G constitute the peripheral sector of the complex.

It localises to the cell inner membrane. The enzyme catalyses a quinone + NADH + 5 H(+)(in) = a quinol + NAD(+) + 4 H(+)(out). Functionally, NDH-1 shuttles electrons from NADH, via FMN and iron-sulfur (Fe-S) centers, to quinones in the respiratory chain. The immediate electron acceptor for the enzyme in this species is believed to be ubiquinone. Couples the redox reaction to proton translocation (for every two electrons transferred, four hydrogen ions are translocated across the cytoplasmic membrane), and thus conserves the redox energy in a proton gradient. The chain is NADH-quinone oxidoreductase subunit D from Paraburkholderia phytofirmans (strain DSM 17436 / LMG 22146 / PsJN) (Burkholderia phytofirmans).